Reading from the N-terminus, the 329-residue chain is Malate dehydrogenase (329 aa).

An NAD(+)-binding site is contributed by 11-17 (GAAGQIG). The substrate site is built by Arg92 and Arg98. NAD(+)-binding positions include Asn105, Gln112, and 129 to 131 (VGN). 2 residues coordinate substrate: Asn131 and Arg165. The Proton acceptor role is filled by His190.

The protein belongs to the LDH/MDH superfamily. MDH type 2 family.

It carries out the reaction (S)-malate + NAD(+) = oxaloacetate + NADH + H(+). Its function is as follows. Catalyzes the reversible oxidation of malate to oxaloacetate. This Laribacter hongkongensis (strain HLHK9) protein is Malate dehydrogenase.